The following is a 380-amino-acid chain: E3 ubiquitin-protein ligase RNF13 (380 aa).

An N-terminal signal peptide occupies residues 1–34; the sequence is MLLSIGMLMLSATQVYTILTVQLFAFLNLLPVEA. The Lumenal segment spans residues 35–182; the sequence is DILAYNFENA…VPEFSLPLEY (148 aa). In terms of domain architecture, PA spans 65–160; that stretch reads KGFLINSKPE…GESSANSLKD (96 aa). N88 is a glycosylation site (N-linked (GlcNAc...) asparagine). The chain crosses the membrane as a helical span at residues 183–203; that stretch reads YLIPFLIIVGICLILIVIFMI. The Cytoplasmic segment spans residues 204 to 380; the sequence is TKFVQDRHRA…ERDYNIANTV (177 aa). Residues 240–282 form an RING-type; atypical zinc finger; that stretch reads CAICLDEYEDGDKLRILPCSHAYHCKCVDPWLTKTKKTCPVCK. The segment at 285–380 is disordered; it reads VVPSQGDSDS…ERDYNIANTV (96 aa). Composition is skewed to acidic residues over residues 292–304 and 339–356; these read SDSD…EENE and SDYE…AENE.

As to quaternary structure, interacts with ERN1. In terms of processing, autoubiquitinated.

The protein resides in the endoplasmic reticulum membrane. The protein localises to the late endosome membrane. It localises to the lysosome membrane. Its subcellular location is the nucleus inner membrane. The enzyme catalyses S-ubiquitinyl-[E2 ubiquitin-conjugating enzyme]-L-cysteine + [acceptor protein]-L-lysine = [E2 ubiquitin-conjugating enzyme]-L-cysteine + N(6)-ubiquitinyl-[acceptor protein]-L-lysine.. The protein operates within protein modification; protein ubiquitination. In terms of biological role, E3 ubiquitin-protein ligase that regulates cell proliferation. Involved in apoptosis regulation. Mediates ER stress-induced activation of JNK signaling pathway and apoptosis by promoting ERN1 activation and splicing of XBP1 mRNA. Also involved in protein trafficking and localization. The polypeptide is E3 ubiquitin-protein ligase RNF13 (RNF13) (Bos taurus (Bovine)).